The sequence spans 163 residues: Ubiquitin-like protein 1-ribosomal protein eS31 fusion protein (163 aa).

One can recognise a Ubiquitin-like domain in the interval 1-70 (MVFVKTLNRT…IYVNLELLGG (70 aa)). Glycine 70 participates in a covalent cross-link: Glycyl lysine isopeptide (Gly-Lys) (interchain with K-? in acceptor proteins). Residues 115–138 (CQQPSCGGGVFMAQHANRHYCGRC) form a C4-type zinc finger.

It in the N-terminal section; belongs to the ubiquitin family. In the C-terminal section; belongs to the eukaryotic ribosomal protein eS31 family.

The chain is Ubiquitin-like protein 1-ribosomal protein eS31 fusion protein (ubl-1) from Caenorhabditis briggsae.